A 301-amino-acid polypeptide reads, in one-letter code: Oxygen-dependent coproporphyrinogen-III oxidase (301 aa).

Ser92 contacts substrate. A divalent metal cation is bound by residues His96 and His106. His106 acts as the Proton donor in catalysis. 108–110 (NVR) is a substrate binding site. His145 and His175 together coordinate a divalent metal cation. Positions 240-275 (YVEFNLVWDRGTLFGLQTGGRTESILMSMPPLVRWE) are important for dimerization. 258 to 260 (GGR) is a substrate binding site.

This sequence belongs to the aerobic coproporphyrinogen-III oxidase family. As to quaternary structure, homodimer. It depends on a divalent metal cation as a cofactor.

The protein localises to the cytoplasm. It catalyses the reaction coproporphyrinogen III + O2 + 2 H(+) = protoporphyrinogen IX + 2 CO2 + 2 H2O. Its pathway is porphyrin-containing compound metabolism; protoporphyrin-IX biosynthesis; protoporphyrinogen-IX from coproporphyrinogen-III (O2 route): step 1/1. Involved in the heme biosynthesis. Catalyzes the aerobic oxidative decarboxylation of propionate groups of rings A and B of coproporphyrinogen-III to yield the vinyl groups in protoporphyrinogen-IX. The protein is Oxygen-dependent coproporphyrinogen-III oxidase of Cronobacter sakazakii (strain ATCC BAA-894) (Enterobacter sakazakii).